A 1067-amino-acid polypeptide reads, in one-letter code: Protein bric-a-brac 2 (1067 aa).

The disordered stretch occupies residues 30–121 (MAPPEEPKMV…PPRPLTSSEV (92 aa)). Composition is skewed to basic and acidic residues over residues 47–62 (HLED…REVE) and 86–98 (KSPE…ELVK). The residue at position 55 (Y55) is a Phosphotyrosine. Phosphoserine is present on residues S56, S87, and S147. In terms of domain architecture, BTB spans 223-288 (VDVTLSCEGH…MYKGEINVCQ (66 aa)). 3 disordered regions span residues 312–412 (GRGE…QSQP), 444–505 (ANQR…AAQH), and 525–563 (GAAG…SHHD). Residues 326–335 (FDDEDEEEEL) show a composition bias toward acidic residues. At S377 the chain carries Phosphoserine. Position 384 is a phosphothreonine (T384). The segment covering 391–412 (GGESEISERGSSGTPGQSQSQP) has biased composition (low complexity). 2 stretches are compositionally biased toward gly residues: residues 525 to 538 (GAAG…GSGS) and 545 to 556 (GGTGVAGSGAGA). An HTH psq-type domain is found at 635 to 687 (FRERGPLKSWRPEAMAEAIFSVLKEGLSLSQAARKFDIPYPTFVLYANRVHNM). Residues 645-690 (RPEAMAEAIFSVLKEGLSLSQAARKFDIPYPTFVLYANRVHNMLGP) constitute a DNA-binding region (H-T-H motif). A DNA-binding region (a.T hook) is located at residues 697 to 708 (DPRPKARGRPQR). Disordered regions lie at residues 796–829 (QILS…PHAQ), 860–879 (AKHQ…PDLS), and 891–967 (VMPS…PYSA). Over residues 812-829 (AHHQQQPSHHQQQSPHAQ) the composition is skewed to low complexity. Residues 904–914 (AAPNSAASYAR) are compositionally biased toward low complexity. Basic and acidic residues predominate over residues 915–933 (ELSRERERDRERERERELS). The span at 934 to 949 (RQYGSQSRGSSSGSGS) shows a compositional bias: low complexity.

In terms of tissue distribution, leg imaginal disk at the central region of the tarsus and in eye antenna disk at the basal cylinder.

Its subcellular location is the nucleus. Probably acts as a transcriptional regulator. Required for the specification of the tarsal segment. Also involved in antenna development. This chain is Protein bric-a-brac 2 (bab2), found in Drosophila melanogaster (Fruit fly).